Here is a 74-residue protein sequence, read N- to C-terminus: CLAVATA3/ESR (CLE)-related protein 19 (74 aa).

An N-terminal signal peptide occupies residues 1–24 (MKIKGLMILASSLLILAFIHQSES). N-linked (GlcNAc...) asparagine glycans are attached at residues Asn-34 and Asn-54. Pro-65 and Pro-68 each carry hydroxyproline. Pro-68 carries O-linked (Ara...) hydroxyproline glycosylation.

The protein belongs to the CLV3/ESR signal peptide family. Post-translationally, the O-glycosylation (arabinosylation) of the hydroxyproline Pro-68 enhances binding affinity of the CLE19p peptide for its receptor. Mostly expressed in heart-shape embryos, pollen and young flower buds, and, to a lower extent, in inflorescence, leaves and roots.

It localises to the secreted. The protein resides in the extracellular space. Extracellular signal peptide that regulates cell fate. Represses root apical meristem maintenance. This Arabidopsis thaliana (Mouse-ear cress) protein is CLAVATA3/ESR (CLE)-related protein 19.